A 328-amino-acid polypeptide reads, in one-letter code: MSASVELKPTEKFSKFLEEYSSVPVRAAIISISNENSFDVKTMVEKSESIESDFKKVRECLLGSEEPAFVLVYDDSKKNLLQLISYVPENANVRRKMLYASSRAAFVRCVTLAKLDESYFASTPEELDYQQIMKSLSKQEDQSPLRQDELERKEYNESMQSSVTHKRPLVTRGVAMSIDDKALKALSDLKSSTENNLVILSIDKEVISLSQEKQNIPPSDVKSFFSSTEPNFAFYSLPKDGSSKILFIYICPMQATVKHRMVYSSSKLGLLDSIKAELGIVIDGKIESNDAADITEKEILHAAGISSPQAETSTTKTGFSRPRPPRRR.

Residues 1–137 (MSASVELKPT…DYQQIMKSLS (137 aa)) enclose the ADF-H 1 domain. Phosphoserine is present on Ser-143. Residues 173-304 (GVAMSIDDKA…TEKEILHAAG (132 aa)) form the ADF-H 2 domain. The tract at residues 302 to 328 (AAGISSPQAETSTTKTGFSRPRPPRRR) is disordered. Residues 306–318 (SSPQAETSTTKTG) show a composition bias toward polar residues.

Belongs to the actin-binding proteins ADF family. Twinfilin subfamily. In terms of assembly, interacts with G-actin; ADP-actin form.

Its subcellular location is the cytoplasm. The protein resides in the cytoskeleton. Functionally, actin-binding protein involved in motile and morphological processes. Inhibits actin polymerization, likely by sequestering G-actin. Prevents actin filament assembly by forming a 1:1 complex with actin monomers, and inhibits the nucleotide exchange reaction of actin monomers. The polypeptide is Twinfilin (twf1) (Schizosaccharomyces pombe (strain 972 / ATCC 24843) (Fission yeast)).